The following is a 338-amino-acid chain: Heme A synthase (338 aa).

5 consecutive transmembrane segments (helical) span residues 6-26 (ITKWLSISCIMVIAMIVIGGI), 93-113 (GRITALIYIVPLIYFYFKGII), 118-138 (IAPYIIALLLLYVQGFMGWYM), 154-174 (LAFHLIIAVIIYHILFYQLIK), and 201-221 (VIYLQIFLGALVAGLDAGLIY). Histidine 256 is a heme binding site. Helical transmembrane passes span 258-278 (LGGYSVFLVVMALATYLLKIE), 285-305 (IAYFLIIALLMQISTGIITLL), and 308-328 (VPIIIASTHQFFAIVLLSVII). Heme is bound at residue histidine 316.

The protein belongs to the COX15/CtaA family. Type 2 subfamily. As to quaternary structure, interacts with CtaB. It depends on heme b as a cofactor.

Its subcellular location is the cell membrane. It carries out the reaction Fe(II)-heme o + 2 A + H2O = Fe(II)-heme a + 2 AH2. The protein operates within porphyrin-containing compound metabolism; heme A biosynthesis; heme A from heme O: step 1/1. Its function is as follows. Catalyzes the conversion of heme O to heme A by two successive hydroxylations of the methyl group at C8. The first hydroxylation forms heme I, the second hydroxylation results in an unstable dihydroxymethyl group, which spontaneously dehydrates, resulting in the formyl group of heme A. This chain is Heme A synthase, found in Rickettsia canadensis (strain McKiel).